We begin with the raw amino-acid sequence, 240 residues long: Ubiquinone biosynthesis O-methyltransferase (240 aa).

S-adenosyl-L-methionine contacts are provided by Arg-44, Gly-64, Asp-85, and Met-129.

It belongs to the methyltransferase superfamily. UbiG/COQ3 family.

It catalyses the reaction a 3-demethylubiquinol + S-adenosyl-L-methionine = a ubiquinol + S-adenosyl-L-homocysteine + H(+). It carries out the reaction a 3-(all-trans-polyprenyl)benzene-1,2-diol + S-adenosyl-L-methionine = a 2-methoxy-6-(all-trans-polyprenyl)phenol + S-adenosyl-L-homocysteine + H(+). The protein operates within cofactor biosynthesis; ubiquinone biosynthesis. Its function is as follows. O-methyltransferase that catalyzes the 2 O-methylation steps in the ubiquinone biosynthetic pathway. In Escherichia coli (strain ATCC 8739 / DSM 1576 / NBRC 3972 / NCIMB 8545 / WDCM 00012 / Crooks), this protein is Ubiquinone biosynthesis O-methyltransferase.